Reading from the N-terminus, the 102-residue chain is Small ribosomal subunit protein uS10 (102 aa).

This sequence belongs to the universal ribosomal protein uS10 family. In terms of assembly, part of the 30S ribosomal subunit.

Involved in the binding of tRNA to the ribosomes. The sequence is that of Small ribosomal subunit protein uS10 from Clostridium kluyveri (strain NBRC 12016).